A 310-amino-acid chain; its full sequence is Thioredoxin reductase (310 aa).

FAD is bound at residue 34 to 41 (NGMQPGGQ). Cys-135 and Cys-138 are disulfide-bonded. 281 to 290 (DVQDKIYRQA) is an FAD binding site.

This sequence belongs to the class-II pyridine nucleotide-disulfide oxidoreductase family. In terms of assembly, homodimer. FAD serves as cofactor.

Its subcellular location is the cytoplasm. It catalyses the reaction [thioredoxin]-dithiol + NADP(+) = [thioredoxin]-disulfide + NADPH + H(+). This chain is Thioredoxin reductase (trxB), found in Rickettsia prowazekii (strain Madrid E).